We begin with the raw amino-acid sequence, 380 residues long: Cytochrome b (380 aa).

4 consecutive transmembrane segments (helical) span residues 34 to 54 (FGSL…LLAM), 78 to 99 (WLIR…YLHI), 114 to 134 (WNTG…GYVL), and 179 to 199 (FFAL…IHLT). Heme b contacts are provided by histidine 84 and histidine 98. Histidine 183 and histidine 197 together coordinate heme b. Histidine 202 serves as a coordination point for a ubiquinone. A run of 4 helical transmembrane segments spans residues 227-247 (LKDI…ALFS), 289-309 (LGGV…PFLH), 321-341 (ISQL…WVGS), and 348-368 (FIII…VLFP).

The protein belongs to the cytochrome b family. In terms of assembly, the cytochrome bc1 complex contains 11 subunits: 3 respiratory subunits (MT-CYB, CYC1 and UQCRFS1), 2 core proteins (UQCRC1 and UQCRC2) and 6 low-molecular weight proteins (UQCRH/QCR6, UQCRB/QCR7, UQCRQ/QCR8, UQCR10/QCR9, UQCR11/QCR10 and a cleavage product of UQCRFS1). This cytochrome bc1 complex then forms a dimer. Heme b is required as a cofactor.

The protein resides in the mitochondrion inner membrane. Component of the ubiquinol-cytochrome c reductase complex (complex III or cytochrome b-c1 complex) that is part of the mitochondrial respiratory chain. The b-c1 complex mediates electron transfer from ubiquinol to cytochrome c. Contributes to the generation of a proton gradient across the mitochondrial membrane that is then used for ATP synthesis. This is Cytochrome b (MT-CYB) from Pelecanoides georgicus (South Georgia diving petrel).